A 216-amino-acid polypeptide reads, in one-letter code: MLGIGAFKQRMPRSGEALPGRTQALPLHNTHLINGHPLRGEFTGLAQVQFGLGCFWGAERKFWNVPGVYTTAVGYAGGKTPNATYSEVCSGQTGHTEAVLVVYDAQAVSFEQLLRTFWESHDPTQGMQQGSDVGTQYRSAIYCSTQAQYDAAIASRDAYQQQLTAAGYGDITTEILYPAPTFYYAEDDHQQYLAKHPNGYCGLGGTGVSCPIGLDA.

Cys54 is an active-site residue.

Belongs to the MsrA Met sulfoxide reductase family.

The enzyme catalyses L-methionyl-[protein] + [thioredoxin]-disulfide + H2O = L-methionyl-(S)-S-oxide-[protein] + [thioredoxin]-dithiol. The catalysed reaction is [thioredoxin]-disulfide + L-methionine + H2O = L-methionine (S)-S-oxide + [thioredoxin]-dithiol. In terms of biological role, has an important function as a repair enzyme for proteins that have been inactivated by oxidation. Catalyzes the reversible oxidation-reduction of methionine sulfoxide in proteins to methionine. The polypeptide is Peptide methionine sulfoxide reductase MsrA (Xanthomonas campestris pv. campestris (strain 8004)).